Consider the following 673-residue polypeptide: MSKPFKLNSAFKPSGDQPDAIRRLEEGLEDGLAHQTLLGVTGSGKTFTIANVIADLQRPTMVLAPNKTLAAQLYGEMKEFFPENAVEYFVSYYDYYQPEAYVPSSDTFIEKDASVNEHIEQMRLSATKALLERRDVVVVASVSAIYGLGDPDLYLKMMLHLTVGMLIDQRAILRRLAELQYTRNDQAFQRGTFRVRGEVIDIFPAESDDIALRVELFDEEVERLSLFDPLTGQVESTVPRYTIYPKTHYVTPRERILQAMEEIKDELADRRKVLLANNKLLEEQRLSQRTQFDLEMMNELGYCSGIENYSRFLSGRGPGEPPPTLFDYLPADGLLVVDESHVTIPQIGGMYRGDRARKETLVEYGFRLPSALDNRPLKFEEFEALAPQTIYVSATPGNYELEKSGDEVVDQVVRPTGLLDPIIEVRPVATQVDDLLSEIRQRAAINERVLVTTLTKRMAEDLTEYLEEHGERVRYLHSDIDTVERMEIIRDLRLGEFDVLVGINLLREGLDMPEVSLVAILDADKEGFLRSERSLIQTIGRAARNVNGKAILYGDKITPSMAKAIGETERRREKQQKYNEEHGITPQGLNKKVVDILALGQNIAKTKAKGKGKGRSTAKAGIVELDMTPKALQQKIHELEEQMMQHAQNLEFEEAAQIRDQLHQLRELFIAAS.

The 389-residue stretch at Glu26–Arg414 folds into the Helicase ATP-binding domain. Gly39–Thr46 serves as a coordination point for ATP. The Beta-hairpin signature appears at Tyr92–Val115. In terms of domain architecture, Helicase C-terminal spans Gln431 to Leu597. In terms of domain architecture, UVR spans Gln633 to Leu668.

Belongs to the UvrB family. As to quaternary structure, forms a heterotetramer with UvrA during the search for lesions. Interacts with UvrC in an incision complex.

The protein localises to the cytoplasm. Its function is as follows. The UvrABC repair system catalyzes the recognition and processing of DNA lesions. A damage recognition complex composed of 2 UvrA and 2 UvrB subunits scans DNA for abnormalities. Upon binding of the UvrA(2)B(2) complex to a putative damaged site, the DNA wraps around one UvrB monomer. DNA wrap is dependent on ATP binding by UvrB and probably causes local melting of the DNA helix, facilitating insertion of UvrB beta-hairpin between the DNA strands. Then UvrB probes one DNA strand for the presence of a lesion. If a lesion is found the UvrA subunits dissociate and the UvrB-DNA preincision complex is formed. This complex is subsequently bound by UvrC and the second UvrB is released. If no lesion is found, the DNA wraps around the other UvrB subunit that will check the other stand for damage. The protein is UvrABC system protein B of Salmonella typhi.